We begin with the raw amino-acid sequence, 470 residues long: Cysteine--tRNA ligase (470 aa).

Cys-27 lines the Zn(2+) pocket. The 'HIGH' region signature appears at 29–39 (PTVYNYIHIGN). 3 residues coordinate Zn(2+): Cys-207, His-232, and Glu-236. The 'KMSKS' region signature appears at 264 to 268 (KMSKS). Residue Lys-267 participates in ATP binding.

This sequence belongs to the class-I aminoacyl-tRNA synthetase family. Monomer. It depends on Zn(2+) as a cofactor.

The protein localises to the cytoplasm. It catalyses the reaction tRNA(Cys) + L-cysteine + ATP = L-cysteinyl-tRNA(Cys) + AMP + diphosphate. This Lachnoclostridium phytofermentans (strain ATCC 700394 / DSM 18823 / ISDg) (Clostridium phytofermentans) protein is Cysteine--tRNA ligase.